We begin with the raw amino-acid sequence, 84 residues long: Small ribosomal subunit protein bS18 (84 aa).

It belongs to the bacterial ribosomal protein bS18 family. Part of the 30S ribosomal subunit. Forms a tight heterodimer with protein bS6.

Functionally, binds as a heterodimer with protein bS6 to the central domain of the 16S rRNA, where it helps stabilize the platform of the 30S subunit. The protein is Small ribosomal subunit protein bS18 of Vesicomyosocius okutanii subsp. Calyptogena okutanii (strain HA).